Reading from the N-terminus, the 125-residue chain is Small ribosomal subunit protein uS13 (125 aa).

The segment at 95–125 (GLPVRGQRTKNNCRTRKGKRKTVANKKKATK) is disordered.

Belongs to the universal ribosomal protein uS13 family. Part of the 30S ribosomal subunit. Forms a loose heterodimer with protein S19. Forms two bridges to the 50S subunit in the 70S ribosome.

Located at the top of the head of the 30S subunit, it contacts several helices of the 16S rRNA. In the 70S ribosome it contacts the 23S rRNA (bridge B1a) and protein L5 of the 50S subunit (bridge B1b), connecting the 2 subunits; these bridges are implicated in subunit movement. Contacts the tRNAs in the A and P-sites. The polypeptide is Small ribosomal subunit protein uS13 (Cytophaga hutchinsonii (strain ATCC 33406 / DSM 1761 / CIP 103989 / NBRC 15051 / NCIMB 9469 / D465)).